We begin with the raw amino-acid sequence, 669 residues long: L-type lectin-domain containing receptor kinase IV.4 (669 aa).

The N-terminal stretch at 1–23 (MFFIKLFTIFFLSFFWQSLKSSS) is a signal peptide. At 24–294 (QIIDFTYNGF…TRVYRFYKNW (271 aa)) the chain is on the extracellular side. The segment at 26 to 260 (IDFTYNGFRP…SEIFVLGWSF (235 aa)) is legume-lectin like. Asparagine 58, asparagine 80, asparagine 127, asparagine 152, and asparagine 185 each carry an N-linked (GlcNAc...) asparagine glycan. The chain crosses the membrane as a helical span at residues 295 to 315 (VPLISLLLIPFLLIIFLVRFI). At 316–669 (MKRRRKFAEE…VAYSLLSSGR (354 aa)) the chain is on the cytoplasmic side. The region spanning 350 to 627 (FKDKNILGSG…LQYLRGDAML (278 aa)) is the Protein kinase domain. ATP-binding positions include 356–364 (LGSGGFGSV) and lysine 379. The active-site Proton acceptor is the aspartate 475.

In the C-terminal section; belongs to the protein kinase superfamily. Ser/Thr protein kinase family. The protein in the N-terminal section; belongs to the leguminous lectin family.

The protein localises to the cell membrane. It catalyses the reaction L-seryl-[protein] + ATP = O-phospho-L-seryl-[protein] + ADP + H(+). It carries out the reaction L-threonyl-[protein] + ATP = O-phospho-L-threonyl-[protein] + ADP + H(+). In terms of biological role, involved in resistance response to the pathogenic oomycetes Phytophthora infestans and Phytophthora capsici and to the pathogenic bacteria Pseudomonas syringae. The protein is L-type lectin-domain containing receptor kinase IV.4 of Arabidopsis thaliana (Mouse-ear cress).